The primary structure comprises 480 residues: Aromatic-L-amino-acid decarboxylase (480 aa).

Lys-292 is modified (N6-(pyridoxal phosphate)lysine).

The protein belongs to the group II decarboxylase family. Pyridoxal 5'-phosphate serves as cofactor.

The enzyme catalyses L-tryptophan + H(+) = tryptamine + CO2. It catalyses the reaction L-phenylalanine + H(+) = 2-phenylethylamine + CO2. The catalysed reaction is 5-hydroxy-L-tryptophan + H(+) = serotonin + CO2. It carries out the reaction L-dopa + H(+) = dopamine + CO2. Its function is as follows. Involved in bacillamide C biosynthesis. Catalyzes the decarboxylation of L-tryptophan to tryptamine. The tryptamine obtained is then probably incorporated into the bacillamide C peptide, which is derived from the amino acids alanine, cysteine and tryptophan through nonribosomal peptide synthetase (NRPS) biosynthesis strategy. L-tryptophan is the best substrate, but the enzyme displays broad substrate specificity for various aromatic amino acids in vitro and it can also catalyze the decarboxylation of L-phenylalanine, 5-hydroxy-L-tryptophan (L-HTP) and L-DOPA, with lower efficiency. Exhibits weak activity with L-tyrosine. This chain is Aromatic-L-amino-acid decarboxylase, found in Bacillus atrophaeus.